Consider the following 143-residue polypeptide: AP-2 complex subunit sigma (143 aa).

Belongs to the adaptor complexes small subunit family. In terms of assembly, adaptor protein complex 2 (AP-2) is a heterotetramer composed of two large adaptins (alpha-type subunit apl3 and beta-type subunit apl1), a medium chain (mu-type subunit apm4) and a small adaptin (sigma-type subunit aps2).

Its subcellular location is the cell membrane. The protein resides in the membrane. The protein localises to the coated pit. Its function is as follows. Component of the adaptor complexes which link clathrin to receptors in coated vesicles. Clathrin-associated protein complexes are believed to interact with the cytoplasmic tails of membrane proteins, leading to their selection and concentration. In Schizosaccharomyces pombe (strain 972 / ATCC 24843) (Fission yeast), this protein is AP-2 complex subunit sigma (aps2).